Reading from the N-terminus, the 350-residue chain is Induced myeloid leukemia cell differentiation protein Mcl-1 homolog (350 aa).

A Glycyl lysine isopeptide (Lys-Gly) (interchain with G-Cter in ubiquitin) cross-link involves residue Lys5. The interval 23–95 (AGSGGASSSG…GPNVSATPPR (73 aa)) is disordered. Residues 31–41 (SGGRLLASGRE) show a composition bias toward low complexity. The segment covering 50-61 (GGEAGAVIGGSA) has biased composition (gly residues). The interval 104-175 (RASPPEEMEG…PAEEEEDELY (72 aa)) is PEST-like. Ser121 is modified (phosphoserine). A Glycyl lysine isopeptide (Lys-Gly) (interchain with G-Cter in ubiquitin) cross-link involves residue Lys136. Residues 150–169 (ASSGPGMDGSLPSTPPPAEE) are disordered. Ser159 is modified (phosphoserine; by GSK3-alpha and GSK3-beta). A Phosphoserine modification is found at Ser162. Thr163 carries the phosphothreonine modification. Glycyl lysine isopeptide (Lys-Gly) (interchain with G-Cter in ubiquitin) cross-links involve residues Lys194 and Lys197. A BH3 motif is present at residues 209 to 223 (ALETLQRVGDGVQRN). Positions 252 to 272 (HVFSDGVTNWGRIVTLISFGA) match the BH1 motif. Positions 304–319 (DWLVKQRGWDGFVEFF) match the BH2 motif. The helical transmembrane segment at 327–349 (GIRNVLLAFAGVAGVGAGLAYLI) threads the bilayer.

The protein belongs to the Bcl-2 family. In terms of assembly, interacts with HIF3A (via C-terminus domain). Interacts with BOK, BIK, BAX, BAK1, and TPT1. Interacts with unphosphorylated BAD. Interacts with BMF, BBC3 and PMAIP1. Interacts with BOP. Interacts with BCL2L11; may sequester BCL2L11 to prevent its pro-apoptotic activity. Interacts with GIMAP5 and HSPA8/HSC70; the interaction between HSPA8 and MCL1 is impaired in the absence of GIMAP5. Cleaved by CASP3 during apoptosis, yielding a pro-apoptotic C-terminal fragment. Post-translationally, rapidly degraded in the absence of phosphorylation in the PEST region. In terms of processing, phosphorylated on Ser-159, by GSK3, in response to IL3/interleukin-3 withdrawal. Phosphorylation at Ser-159 induces ubiquitination and proteasomal degradation, abrogating the anti-apoptotic activity. Treatment with taxol or okadaic acid induces phosphorylation on additional sites. Ubiquitinated. Ubiquitination is induced by phosphorylation at Ser-159. Deubiquitinated by USP20; leading to increased stability. In terms of tissue distribution, detected in peripheral blood mononuclear cells and bone marrow.

The protein resides in the membrane. Its subcellular location is the cytoplasm. It localises to the mitochondrion. The protein localises to the nucleus. It is found in the nucleoplasm. Its function is as follows. Involved in the regulation of apoptosis versus cell survival, and in the maintenance of viability but not of proliferation. Mediates its effects by interactions with a number of other regulators of apoptosis. The chain is Induced myeloid leukemia cell differentiation protein Mcl-1 homolog (MCL1) from Canis lupus familiaris (Dog).